Consider the following 353-residue polypeptide: DNA-directed RNA polymerase subunit alpha (353 aa).

The segment at 1 to 245 is alpha N-terminal domain (alpha-NTD); it reads MEKIQKITYK…AHFQIIGNIN (245 aa). Residues 261 to 353 form an alpha C-terminal domain (alpha-CTD) region; that stretch reads EREIKSTTPI…QLNNSEEGEE (93 aa).

It belongs to the RNA polymerase alpha chain family. In terms of assembly, homodimer. The RNAP catalytic core consists of 2 alpha, 1 beta, 1 beta' and 1 omega subunit. When a sigma factor is associated with the core the holoenzyme is formed, which can initiate transcription.

The catalysed reaction is RNA(n) + a ribonucleoside 5'-triphosphate = RNA(n+1) + diphosphate. DNA-dependent RNA polymerase catalyzes the transcription of DNA into RNA using the four ribonucleoside triphosphates as substrates. The protein is DNA-directed RNA polymerase subunit alpha of Mycoplasma sp.